Here is an 805-residue protein sequence, read N- to C-terminus: Shutoff protein (805 aa).

The interval 1-88 is disordered; sequence MESVEKEDSL…QVGRGDQRHG (88 aa). Residues 18 to 29 are compositionally biased toward polar residues; sequence TTASTDAANAPT. Composition is skewed to basic and acidic residues over residues 59–70 and 79–88; these read RSVPTEDKKQDQ and QVGRGDQRHG. Residues 280–345 are binding to host EIF4G; the sequence is VMSELIVRRA…AVLVTVELEC (66 aa). One can recognise an RRM domain in the interval 348–466; that stretch reads RFFADPEMQR…DLWTAFNERS (119 aa). Residues tyrosine 365 and tyrosine 682 each carry the phosphotyrosine; by host modification. The tract at residues 684-805 is disordered; it reads DPQSGEELNP…AGTACSPTQP (122 aa). Positions 726–742 are enriched in gly residues; that stretch reads GRGGILGQSGRGGFGRG. The segment covering 754-763 has biased composition (basic residues); sequence RSFRGRRGVR.

Belongs to the adenoviridae shutoff protein family. Monomer. Interacts with hexon protein; this interaction allows chaperoning and trimerization of hexon proteins. Interacts (via N-terminus) with host initiation factor EIF4G (via C-terminus). Interacts (via RRM domain) with viral mRNAs that contain the tripartite leader; this interaction allows ribosome shunting and expression of viral late mRNAs. Might be cleaved by the viral protease. Post-translationally, phosphorylated. Tyrosine phosphorylation enhances preferential binding to tripartite leader mRNAs and allows ribosome shunting. In terms of processing, methylated. Asymmetric dimethylation by host PRMT1 of the Arg/Gly-rich region may regulate shutoff protein binding to hexon and promote the capsid assembly in the nucleus.

The protein resides in the host cytoplasm. Protein that inhibits host translation while promoting late viral translation by ribosome shunting. Blocks host cap-dependent translation by binding to eIF4G, displacing MKNK1 from cap initiation complexes and preventing EIF4E phosphorylation. Binds to the tripartite leader sequence of viral late mRNAs and recruits host eIF4G, PABPC1/poly-A binding protein and 40S ribosomes subunits on viral mRNAs, allowing ribosome shunting and efficient translation of late viral mRNAs even though conventional translation via ribosome scanning from the cap has been shut off in the host cell. During assembly, acts as a chaperone protein that helps hexon proteins assembly into trimers. In Homo sapiens (Human), this protein is Shutoff protein.